We begin with the raw amino-acid sequence, 190 residues long: Peptidyl-tRNA hydrolase (190 aa).

Tyrosine 14 contributes to the tRNA binding site. Histidine 19 serves as the catalytic Proton acceptor. The tRNA site is built by tyrosine 64, asparagine 66, and asparagine 112.

The protein belongs to the PTH family. Monomer.

The protein resides in the cytoplasm. It carries out the reaction an N-acyl-L-alpha-aminoacyl-tRNA + H2O = an N-acyl-L-amino acid + a tRNA + H(+). Functionally, hydrolyzes ribosome-free peptidyl-tRNAs (with 1 or more amino acids incorporated), which drop off the ribosome during protein synthesis, or as a result of ribosome stalling. Catalyzes the release of premature peptidyl moieties from peptidyl-tRNA molecules trapped in stalled 50S ribosomal subunits, and thus maintains levels of free tRNAs and 50S ribosomes. This chain is Peptidyl-tRNA hydrolase, found in Chlorobaculum parvum (strain DSM 263 / NCIMB 8327) (Chlorobium vibrioforme subsp. thiosulfatophilum).